Here is a 238-residue protein sequence, read N- to C-terminus: Ribonuclease PH (238 aa).

Phosphate contacts are provided by residues R86 and 124–126 (GTR).

This sequence belongs to the RNase PH family. Homohexameric ring arranged as a trimer of dimers.

The enzyme catalyses tRNA(n+1) + phosphate = tRNA(n) + a ribonucleoside 5'-diphosphate. Its function is as follows. Phosphorolytic 3'-5' exoribonuclease that plays an important role in tRNA 3'-end maturation. Removes nucleotide residues following the 3'-CCA terminus of tRNAs; can also add nucleotides to the ends of RNA molecules by using nucleoside diphosphates as substrates, but this may not be physiologically important. Probably plays a role in initiation of 16S rRNA degradation (leading to ribosome degradation) during starvation. The protein is Ribonuclease PH of Marinobacter nauticus (strain ATCC 700491 / DSM 11845 / VT8) (Marinobacter aquaeolei).